We begin with the raw amino-acid sequence, 304 residues long: Protoheme IX farnesyltransferase 1 (304 aa).

The next 8 helical transmembrane spans lie at 24 to 44, 47 to 67, 99 to 119, 122 to 142, 150 to 170, 176 to 196, 228 to 248, and 280 to 300; these read VVVL…KAPL, FVPW…AGAA, MALG…LAFT, LTAW…TGFL, IVIG…AITG, PLLL…ALCI, LVLF…LVYL, and YSIV…YLPL.

This sequence belongs to the UbiA prenyltransferase family. Protoheme IX farnesyltransferase subfamily.

Its subcellular location is the cell inner membrane. It carries out the reaction heme b + (2E,6E)-farnesyl diphosphate + H2O = Fe(II)-heme o + diphosphate. Its pathway is porphyrin-containing compound metabolism; heme O biosynthesis; heme O from protoheme: step 1/1. Functionally, converts heme B (protoheme IX) to heme O by substitution of the vinyl group on carbon 2 of heme B porphyrin ring with a hydroxyethyl farnesyl side group. The sequence is that of Protoheme IX farnesyltransferase 1 from Pseudomonas aeruginosa (strain UCBPP-PA14).